The sequence spans 123 residues: MDLIAQLEAEQIAALGKEIPDFKAGDTIRVGYKVTEGTRTRVQAYEGVCISRKNGSGIAGSFTVRKISFGEGVERVFPLYSTNIESIEVVRRGRVRRAKLYYLRSRRGKSARIAEDANYKAKA.

This sequence belongs to the bacterial ribosomal protein bL19 family.

Functionally, this protein is located at the 30S-50S ribosomal subunit interface and may play a role in the structure and function of the aminoacyl-tRNA binding site. The sequence is that of Large ribosomal subunit protein bL19 from Ruegeria sp. (strain TM1040) (Silicibacter sp.).